The following is a 159-amino-acid chain: Probable E3 ubiquitin-protein ligase RHA1A (159 aa).

Residues 86-130 (CTVCLSDFESDDKVRQLPKCGHVFHHYCLDRWIVDYNKMKCPVCR) form an RING-type; atypical zinc finger.

As to expression, predominantly expressed in stems.

The enzyme catalyses S-ubiquitinyl-[E2 ubiquitin-conjugating enzyme]-L-cysteine + [acceptor protein]-L-lysine = [E2 ubiquitin-conjugating enzyme]-L-cysteine + N(6)-ubiquitinyl-[acceptor protein]-L-lysine.. The protein operates within protein modification; protein ubiquitination. Its function is as follows. Probable E3 ubiquitin-protein ligase that may possess E3 ubiquitin ligase activity in vitro. The polypeptide is Probable E3 ubiquitin-protein ligase RHA1A (Arabidopsis thaliana (Mouse-ear cress)).